The sequence spans 378 residues: Erythronate-4-phosphate dehydrogenase (378 aa).

Positions 45 and 66 each coordinate substrate. Positions 146 and 175 each coordinate NAD(+). Arginine 208 is an active-site residue. Residue aspartate 232 participates in NAD(+) binding. Residue glutamate 237 is part of the active site. Histidine 254 functions as the Proton donor in the catalytic mechanism. An NAD(+)-binding site is contributed by glycine 257. Tyrosine 258 provides a ligand contact to substrate.

Belongs to the D-isomer specific 2-hydroxyacid dehydrogenase family. PdxB subfamily. As to quaternary structure, homodimer.

The protein localises to the cytoplasm. It catalyses the reaction 4-phospho-D-erythronate + NAD(+) = (R)-3-hydroxy-2-oxo-4-phosphooxybutanoate + NADH + H(+). Its pathway is cofactor biosynthesis; pyridoxine 5'-phosphate biosynthesis; pyridoxine 5'-phosphate from D-erythrose 4-phosphate: step 2/5. Its function is as follows. Catalyzes the oxidation of erythronate-4-phosphate to 3-hydroxy-2-oxo-4-phosphonooxybutanoate. This is Erythronate-4-phosphate dehydrogenase from Pectobacterium carotovorum subsp. carotovorum (strain PC1).